Consider the following 311-residue polypeptide: Malate dehydrogenase (311 aa).

NAD(+)-binding positions include glycine 7–glycine 13 and aspartate 34. Substrate is bound by residues arginine 81 and arginine 87. NAD(+)-binding positions include asparagine 94 and isoleucine 117–asparagine 119. Substrate is bound by residues asparagine 119 and arginine 153. Catalysis depends on histidine 177, which acts as the Proton acceptor. NAD(+) is bound at residue methionine 227.

The protein belongs to the LDH/MDH superfamily. MDH type 1 family. Homodimer.

The enzyme catalyses (S)-malate + NAD(+) = oxaloacetate + NADH + H(+). In terms of biological role, catalyzes the reversible oxidation of malate to oxaloacetate. This chain is Malate dehydrogenase, found in Shewanella sp. (strain MR-4).